Consider the following 338-residue polypeptide: uncharacterized protein (338 aa).

Positions 1–20 (MYNNNQNHHNNDNNMNKDEP) are disordered. The segment covering 9 to 20 (HNNDNNMNKDEP) has biased composition (basic and acidic residues). N-linked (GlcNAc...) asparagine glycosylation is found at Asn-37, Asn-83, Asn-97, Asn-105, Asn-114, and Asn-122. Positions 55-92 (VNSGNNNNNNNNNNNNNNNNNNNNNNNNNDSIVINMDT) are disordered. A compositionally biased stretch (low complexity) spans 59 to 92 (NNNNNNNNNNNNNNNNNNNNNNNNNDSIVINMDT). 3 helical membrane-spanning segments follow: residues 148-168 (YKKF…IVLI), 178-198 (FHAY…FLLI), and 202-222 (ILSI…FLKV). N-linked (GlcNAc...) asparagine glycosylation is found at Asn-229, Asn-240, Asn-286, Asn-302, Asn-317, and Asn-322. Disordered regions lie at residues 279–303 (SNLN…NSNS) and 316–338 (LNSS…TNEE). Low complexity predominate over residues 280 to 294 (NLNRNNNNSNNVNNN). The segment covering 316-327 (LNSSGSNSSIYS) has biased composition (low complexity). The span at 328-338 (DVQNDIGTNEE) shows a compositional bias: polar residues.

The protein localises to the membrane. This is an uncharacterized protein from Dictyostelium discoideum (Social amoeba).